The following is a 174-amino-acid chain: Shikimate kinase 2 (174 aa).

12-17 (GAGKTT) lines the ATP pocket. Mg(2+) contacts are provided by threonine 16 and aspartate 32. Positions 34, 58, and 79 each coordinate substrate. The segment at 112–126 (MQQPESTQRPSLTGK) is LID domain. Arginine 120 contributes to the ATP binding site. A substrate-binding site is contributed by arginine 139.

Belongs to the shikimate kinase family. AroL subfamily. Monomer. Mg(2+) is required as a cofactor.

Its subcellular location is the cytoplasm. It catalyses the reaction shikimate + ATP = 3-phosphoshikimate + ADP + H(+). It functions in the pathway metabolic intermediate biosynthesis; chorismate biosynthesis; chorismate from D-erythrose 4-phosphate and phosphoenolpyruvate: step 5/7. Catalyzes the specific phosphorylation of the 3-hydroxyl group of shikimic acid using ATP as a cosubstrate. This Photorhabdus laumondii subsp. laumondii (strain DSM 15139 / CIP 105565 / TT01) (Photorhabdus luminescens subsp. laumondii) protein is Shikimate kinase 2.